The following is a 139-amino-acid chain: Nucleoside diphosphate kinase (139 aa).

Residues lysine 10, phenylalanine 58, arginine 86, threonine 92, arginine 103, and asparagine 113 each contribute to the ATP site. Histidine 116 (pros-phosphohistidine intermediate) is an active-site residue.

Belongs to the NDK family. As to quaternary structure, homotetramer. Mg(2+) serves as cofactor.

It is found in the cytoplasm. It carries out the reaction a 2'-deoxyribonucleoside 5'-diphosphate + ATP = a 2'-deoxyribonucleoside 5'-triphosphate + ADP. The catalysed reaction is a ribonucleoside 5'-diphosphate + ATP = a ribonucleoside 5'-triphosphate + ADP. Major role in the synthesis of nucleoside triphosphates other than ATP. The ATP gamma phosphate is transferred to the NDP beta phosphate via a ping-pong mechanism, using a phosphorylated active-site intermediate. The sequence is that of Nucleoside diphosphate kinase from Nitratidesulfovibrio vulgaris (strain DSM 19637 / Miyazaki F) (Desulfovibrio vulgaris).